Reading from the N-terminus, the 480-residue chain is Ribulose bisphosphate carboxylase large chain (480 aa).

Residues 1–2 constitute a propeptide that is removed on maturation; sequence MS. N-acetylproline is present on P3. Residue K14 is modified to N6,N6,N6-trimethyllysine. Substrate contacts are provided by N123 and T173. K175 acts as the Proton acceptor in catalysis. K177 is a substrate binding site. Residues K201, D203, and E204 each coordinate Mg(2+). K201 bears the N6-carboxylysine mark. H294 serves as the catalytic Proton acceptor. Substrate is bound by residues R295, H327, and S379.

This sequence belongs to the RuBisCO large chain family. Type I subfamily. Heterohexadecamer of 8 large chains and 8 small chains; disulfide-linked. The disulfide link is formed within the large subunit homodimers. It depends on Mg(2+) as a cofactor. The disulfide bond which can form in the large chain dimeric partners within the hexadecamer appears to be associated with oxidative stress and protein turnover.

Its subcellular location is the plastid. The protein localises to the chloroplast. The enzyme catalyses 2 (2R)-3-phosphoglycerate + 2 H(+) = D-ribulose 1,5-bisphosphate + CO2 + H2O. The catalysed reaction is D-ribulose 1,5-bisphosphate + O2 = 2-phosphoglycolate + (2R)-3-phosphoglycerate + 2 H(+). RuBisCO catalyzes two reactions: the carboxylation of D-ribulose 1,5-bisphosphate, the primary event in carbon dioxide fixation, as well as the oxidative fragmentation of the pentose substrate in the photorespiration process. Both reactions occur simultaneously and in competition at the same active site. The chain is Ribulose bisphosphate carboxylase large chain from Gossypium barbadense (Sea Island cotton).